A 737-amino-acid polypeptide reads, in one-letter code: MKKGRLIAFFLFVLLIGTGLGYFTKPAANNITLGLDLQGGFEVLYDVQPVKKGDKITKDVLVSTVEALNRRANVLGVSEPNIQIEGNNRIRVQLAGVTNQNRAREILATEAQLSFRDANDKELLNGADLVENGAKQTYDSTTNEPIVTIKLKDADKFGEVTKKVMKMAPNNQLVIWLDYDKGDSFKKEVQKEHPKFVSAPNVSQELNTTDVKIEGHFTAQEAKDLASILNAGALPVKLTEKYSTSVGAQFGQQALHDTVFAGIVGIAIIFLFMLFYYRLPGLIAVITLSVYIYITLQIFDWMNAVLTLPGIAALILGVGMAVDANIITYERIKEELKLGKSVRSAFRSGNRRSFATIFDANITTIIAAVVLFIFGTSSVKGFATMLILSILTSFITAVFLSRFLLALLVESRWLDRKKGWFGVNKKHIMDIQDTDENTEPHTPFQKWDFTSKRKYFFIFSSAVTVAGIIILLVFRLNLGIDFASGARIEVQSDHKLTTEQVEKDFESLGMDPDTVVLSGEKSNIGVARFVGVPDKETIAKVKTYFKDKYGSDPNVSTVSPTVGKELARNALYAVAIASIGIIIYVSIRFEYKMAIAAIASLLYDAFFIVTFFSITRLEVDVTFIAAILTIIGYSINDTIVTFDRVREHMKKRKPKTFADLNHIVNLSLQQTFTRSINTVLTVVIVVVTLLIFGASSITNFSIALLVGLLTGVYSSLYIAAQIWLAWKGRELKKDSAQ.

The Cytoplasmic segment spans residues 1 to 5 (MKKGR). The tract at residues 1–416 (MKKGRLIAFF…LLVESRWLDR (416 aa)) is secD. The chain crosses the membrane as a helical span at residues 6–26 (LIAFFLFVLLIGTGLGYFTKP). Residues 27-254 (AANNITLGLD…SVGAQFGQQA (228 aa)) lie on the Extracellular side of the membrane. Residues 255-275 (LHDTVFAGIVGIAIIFLFMLF) traverse the membrane as a helical segment. Residues 276 to 278 (YYR) lie on the Cytoplasmic side of the membrane. A helical membrane pass occupies residues 279–299 (LPGLIAVITLSVYIYITLQIF). Topologically, residues 300–301 (DW) are extracellular. Residues 302–322 (MNAVLTLPGIAALILGVGMAV) traverse the membrane as a helical segment. At 323-353 (DANIITYERIKEELKLGKSVRSAFRSGNRRS) the chain is on the cytoplasmic side. A helical membrane pass occupies residues 354-374 (FATIFDANITTIIAAVVLFIF). Over 375–380 (GTSSVK) the chain is Extracellular. Residues 381–401 (GFATMLILSILTSFITAVFLS) form a helical membrane-spanning segment. At 402–453 (RFLLALLVESRWLDRKKGWFGVNKKHIMDIQDTDENTEPHTPFQKWDFTSKR) the chain is on the cytoplasmic side. The interval 446 to 737 (KWDFTSKRKY…GRELKKDSAQ (292 aa)) is secF. Residues 454–474 (KYFFIFSSAVTVAGIIILLVF) traverse the membrane as a helical segment. The Extracellular portion of the chain corresponds to 475–569 (RLNLGIDFAS…PTVGKELARN (95 aa)). A helical transmembrane segment spans residues 570-590 (ALYAVAIASIGIIIYVSIRFE). At 591 to 593 (YKM) the chain is on the cytoplasmic side. A helical transmembrane segment spans residues 594 to 614 (AIAAIASLLYDAFFIVTFFSI). Residues 615–621 (TRLEVDV) are Extracellular-facing. The helical transmembrane segment at 622–642 (TFIAAILTIIGYSINDTIVTF) threads the bilayer. Topologically, residues 643 to 677 (DRVREHMKKRKPKTFADLNHIVNLSLQQTFTRSIN) are cytoplasmic. A helical membrane pass occupies residues 678 to 698 (TVLTVVIVVVTLLIFGASSIT). Asn-699 is a topological domain (extracellular). Residues 700–720 (FSIALLVGLLTGVYSSLYIAA) traverse the membrane as a helical segment. The Cytoplasmic portion of the chain corresponds to 721–737 (QIWLAWKGRELKKDSAQ).

In the N-terminal section; belongs to the SecD/SecF family. SecD subfamily. This sequence in the C-terminal section; belongs to the SecD/SecF family. SecF subfamily. In terms of assembly, part of the essential Sec protein translocation apparatus which comprises SecA, SecYEG and auxiliary protein SecDF. Other proteins may also be involved.

Its subcellular location is the cell membrane. Functionally, required for efficient translocation of secretory pre-proteins under conditions of hypersecretion but is not required for the release of mature proteins from the membrane. In terms of biological role, part of the Sec protein translocase complex. Interacts with the SecYEG preprotein conducting channel. SecDF uses the proton motive force (PMF) to complete protein translocation after the ATP-dependent function of SecA. The polypeptide is Protein translocase subunit SecDF (secDF) (Bacillus subtilis (strain 168)).